We begin with the raw amino-acid sequence, 270 residues long: Protein US2 homolog (270 aa).

The protein belongs to the herpesviridae US2 family.

This chain is Protein US2 homolog (MDV091), found in Gallid herpesvirus 2 (strain Chicken/Md5/ATCC VR-987) (GaHV-2).